The following is a 306-amino-acid chain: MDFVNHLNDRLLFAVPKKGRLYEKTKQLLNGSDIKFNRSNRLDIALCTTLPIALIFLPAADIPTFVGEGKCDLGITGLDQVKESGIEEIDLLMDLGFGGCKLQVQVPEKDRKYTDPKQLVGKTIVSSFVKLSRDYFQQLEEEVLGKPVDKLSTKIKYVGGSVEASCALGVGDAIVDLVESGETMRAAGLIDIATVLETSAYLIQARRPQQDKSREELIEVIKSRIQGVLTAQRYVCCSYNTPEGNLKELLKVTPGRRAPTISKLDDDGWVAVNSMIERKRKADIMDELKRKGASDIMVFEISNCRV.

This sequence belongs to the ATP phosphoribosyltransferase family.

The protein resides in the cytoplasm. It catalyses the reaction 1-(5-phospho-beta-D-ribosyl)-ATP + diphosphate = 5-phospho-alpha-D-ribose 1-diphosphate + ATP. The protein operates within amino-acid biosynthesis; L-histidine biosynthesis; L-histidine from 5-phospho-alpha-D-ribose 1-diphosphate: step 1/9. Its function is as follows. Catalyzes the condensation of ATP and 5-phosphoribose 1-diphosphate to form N'-(5'-phosphoribosyl)-ATP (PR-ATP). Has a crucial role in the pathway because the rate of histidine biosynthesis seems to be controlled primarily by regulation of the enzymatic activity. The chain is ATP phosphoribosyltransferase (HIS1) from Candida glabrata (strain ATCC 2001 / BCRC 20586 / JCM 3761 / NBRC 0622 / NRRL Y-65 / CBS 138) (Yeast).